The sequence spans 501 residues: Cytochrome P450 71B3 (501 aa).

Residues 2–22 (SILLYFFFLPVILSLIFMKKF) form a helical membrane-spanning segment. C445 is a heme binding site.

It belongs to the cytochrome P450 family. Requires heme as cofactor.

It is found in the membrane. The protein is Cytochrome P450 71B3 (CYP71B3) of Arabidopsis thaliana (Mouse-ear cress).